The following is a 147-amino-acid chain: Probable 4-amino-4-deoxy-L-arabinose-phosphoundecaprenol flippase subunit ArnF (147 aa).

The Cytoplasmic segment spans residues 1 to 23; the sequence is MSNDHPQGQLPASPARSALKGYL. Residues 24-44 traverse the membrane as a helical segment; that stretch reads YVLGSILLVTAAQLGMKWGVI. Residues 45-62 lie on the Periplasmic side of the membrane; sequence QLPTWQMDLAVMLAHPLP. The chain crosses the membrane as a helical span at residues 63 to 83; it reads LLVILAGVGCYALSLLCWLAA. At 84–93 the chain is on the cytoplasmic side; it reads LHSTPLNIAY. A helical membrane pass occupies residues 94–114; sequence PLLSTSYALVYLLAVNIPLFA. Residues 115–121 lie on the Periplasmic side of the membrane; that stretch reads EPLEPGK. The chain crosses the membrane as a helical span at residues 122–142; that stretch reads ALGVLFILLGAVLVGIKPAAG. Over 143 to 147 the chain is Cytoplasmic; that stretch reads TKQTG.

It belongs to the ArnF family. As to quaternary structure, heterodimer of ArnE and ArnF.

Its subcellular location is the cell inner membrane. The protein operates within bacterial outer membrane biogenesis; lipopolysaccharide biosynthesis. In terms of biological role, translocates 4-amino-4-deoxy-L-arabinose-phosphoundecaprenol (alpha-L-Ara4N-phosphoundecaprenol) from the cytoplasmic to the periplasmic side of the inner membrane. The polypeptide is Probable 4-amino-4-deoxy-L-arabinose-phosphoundecaprenol flippase subunit ArnF (Aeromonas hydrophila subsp. hydrophila (strain ATCC 7966 / DSM 30187 / BCRC 13018 / CCUG 14551 / JCM 1027 / KCTC 2358 / NCIMB 9240 / NCTC 8049)).